A 368-amino-acid polypeptide reads, in one-letter code: Anhydro-N-acetylmuramic acid kinase (368 aa).

Residue 11–18 participates in ATP binding; the sequence is GTSLDGID.

The protein belongs to the anhydro-N-acetylmuramic acid kinase family.

It catalyses the reaction 1,6-anhydro-N-acetyl-beta-muramate + ATP + H2O = N-acetyl-D-muramate 6-phosphate + ADP + H(+). The protein operates within amino-sugar metabolism; 1,6-anhydro-N-acetylmuramate degradation. Its pathway is cell wall biogenesis; peptidoglycan recycling. In terms of biological role, catalyzes the specific phosphorylation of 1,6-anhydro-N-acetylmuramic acid (anhMurNAc) with the simultaneous cleavage of the 1,6-anhydro ring, generating MurNAc-6-P. Is required for the utilization of anhMurNAc either imported from the medium or derived from its own cell wall murein, and thus plays a role in cell wall recycling. The sequence is that of Anhydro-N-acetylmuramic acid kinase from Sulfurimonas denitrificans (strain ATCC 33889 / DSM 1251) (Thiomicrospira denitrificans (strain ATCC 33889 / DSM 1251)).